A 513-amino-acid chain; its full sequence is ATP synthase subunit alpha (513 aa).

ATP is bound at residue 169–176 (GDRQTGKT).

Belongs to the ATPase alpha/beta chains family. In terms of assembly, F-type ATPases have 2 components, CF(1) - the catalytic core - and CF(0) - the membrane proton channel. CF(1) has five subunits: alpha(3), beta(3), gamma(1), delta(1), epsilon(1). CF(0) has three main subunits: a(1), b(2) and c(9-12). The alpha and beta chains form an alternating ring which encloses part of the gamma chain. CF(1) is attached to CF(0) by a central stalk formed by the gamma and epsilon chains, while a peripheral stalk is formed by the delta and b chains.

Its subcellular location is the cell inner membrane. It carries out the reaction ATP + H2O + 4 H(+)(in) = ADP + phosphate + 5 H(+)(out). Produces ATP from ADP in the presence of a proton gradient across the membrane. The alpha chain is a regulatory subunit. This is ATP synthase subunit alpha from Pseudoalteromonas translucida (strain TAC 125).